Consider the following 175-residue polypeptide: Enhancer of mRNA-decapping protein 1 (175 aa).

The segment covering 1-27 (MSTDTMYFNSSRLLPSAGRNKTNNLIK) has biased composition (polar residues). 2 disordered regions span residues 1–113 (MSTD…KDDT) and 155–175 (GSTF…PSFL). An N-acetylserine modification is found at Ser2. Over residues 35-47 (ARGNAAKNANNNN) the composition is skewed to low complexity. The span at 58–77 (LPNGQKPNFGHSSNKKPSFN) shows a compositional bias: polar residues. Position 82 is a phosphoserine (Ser82). A compositionally biased stretch (basic and acidic residues) spans 100-113 (NNKETPRQNNKDDT).

This sequence belongs to the EDC family.

The protein localises to the cytoplasm. In terms of biological role, mRNA-binding protein which stimulates mRNA decapping by DCP1 and DCP2. Involved in the regulation of expression of multiple genes involved in glycolysis and gluconeogenesis. The sequence is that of Enhancer of mRNA-decapping protein 1 (EDC1) from Saccharomyces cerevisiae (strain ATCC 204508 / S288c) (Baker's yeast).